The following is a 330-amino-acid chain: G-protein coupled receptor 157 (330 aa).

Over methionine 1 to arginine 15 the chain is Extracellular. A helical membrane pass occupies residues alanine 16 to histidine 36. The Cytoplasmic portion of the chain corresponds to alanine 37–arginine 48. A helical transmembrane segment spans residues leucine 49–leucine 69. Residues glutamine 70–threonine 87 are Extracellular-facing. The chain crosses the membrane as a helical span at residues phenylalanine 88–isoleucine 108. Residues valine 109–histidine 119 are Cytoplasmic-facing. The chain crosses the membrane as a helical span at residues leucine 120 to valine 140. At cysteine 141–arginine 166 the chain is on the extracellular side. Residues valine 167–leucine 187 traverse the membrane as a helical segment. Residues leucine 188 to lysine 227 are Cytoplasmic-facing. A helical membrane pass occupies residues leucine 228–leucine 250. The Extracellular portion of the chain corresponds to cysteine 251 to proline 259. A helical membrane pass occupies residues valine 260–leucine 282. The Cytoplasmic portion of the chain corresponds to cysteine 283 to threonine 330. The segment at threonine 303–threonine 330 is disordered. Basic and acidic residues predominate over residues glutamate 317 to threonine 330.

Belongs to the G-protein coupled receptor 2 family.

Its subcellular location is the cell projection. The protein resides in the cilium membrane. Orphan receptor that promotes neuronal differentiation of radial glial progenitors (RGPs). The activity of this receptor is mediated by a G(q)-protein that activates a phosphatidylinositol-calcium second messenger. The sequence is that of G-protein coupled receptor 157 (Gpr157) from Rattus norvegicus (Rat).